A 142-amino-acid chain; its full sequence is Type IV pilus subunit protein TapA (142 aa).

Positions M1–G6 are cleaved as a propeptide — leader sequence. N-methylphenylalanine is present on F7. A helical membrane pass occupies residues F7 to L27.

It belongs to the N-Me-Phe pilin family.

Its subcellular location is the membrane. Its function is as follows. Major component of the type IV (TAP) pilus. Aeromonas hydrophila possesses two distinct families of type IV pili: the bundle-forming pilus (Bfp) and the type IV pilus (Tap). The chain is Type IV pilus subunit protein TapA (tapA) from Aeromonas hydrophila.